A 353-amino-acid polypeptide reads, in one-letter code: uncharacterized protein (353 aa).

A signal peptide spans 1–18 (MKFVLFAQLAAVAAPAIA). Residues 94-119 (EGGNVRRVPGGPSQSARQIGDSSTPM) are disordered. The segment covering 105–119 (PSQSARQIGDSSTPM) has biased composition (polar residues). N165 and N312 each carry an N-linked (GlcNAc...) asparagine glycan.

Belongs to the glycosyl hydrolase 3 family.

The protein localises to the secreted. This is an uncharacterized protein from Arthroderma benhamiae (strain ATCC MYA-4681 / CBS 112371) (Trichophyton mentagrophytes).